The chain runs to 224 residues: Propanediol dehydratase medium subunit (224 aa).

Residues 1 to 18 (MEINEKLLRQIIEDVLRD) are targets protein to the BMC.

Belongs to the diol/glycerol dehydratase medium subunit family. As to quaternary structure, the propanediol dehydratase enzyme is a heterotrimeric complex composed of a large (PduC), a medium (PduD) and a small (PduE) subunit. Requires adenosylcob(III)alamin as cofactor.

It is found in the bacterial microcompartment. The catalysed reaction is propane-1,2-diol = propanal + H2O. The protein operates within polyol metabolism; 1,2-propanediol degradation. With respect to regulation, inhibited by glycerol. Functionally, part of the PduCDE complex that catalyzes the dehydration of 1,2-propanediol (1,2-PD) to propionaldehyde. Required for S.typhimurium growth on 1,2-PD as the sole carbon and energy source. This subunit is directly targeted to the bacterial microcompartment (BMC) dedicated to 1,2-PD degradation, and is also responsible for targeting the other 2 subunits (pduC and pduE). In terms of biological role, the 1,2-PD-specific bacterial microcompartment (BMC) concentrates low levels of 1,2-PD catabolic enzymes, concentrates volatile reaction intermediates thus enhancing pathway flux and keeps the level of toxic, mutagenic propionaldehyde low. The chain is Propanediol dehydratase medium subunit from Salmonella typhimurium (strain LT2 / SGSC1412 / ATCC 700720).